A 598-amino-acid polypeptide reads, in one-letter code: MFS siderochrome iron transporter D (598 aa).

A disordered region spans residues 1–34; the sequence is MLSSWQKKFFQTPEHPPAEGIAPPRDDGVPNPEP. At 1–76 the chain is on the cytoplasmic side; the sequence is MLSSWQKKFF…AEAITLTWSK (76 aa). The chain crosses the membrane as a helical span at residues 77–97; sequence ISLGAAYFLMWLLYLVNGFQA. Topologically, residues 98-115 are extracellular; sequence SITGNLSAYVTSGFESHS. Asparagine 102 carries N-linked (GlcNAc...) asparagine glycosylation. A helical membrane pass occupies residues 116-136; it reads LIPVISIVSSVMSAATYMPLA. The Cytoplasmic segment spans residues 137 to 144; sequence KVLNLWDR. The helical transmembrane segment at 145–165 threads the bilayer; that stretch reads SIGFIIMVAFATLGLILSATC. Over 166-171 the chain is Extracellular; sequence HDIGTY. A helical membrane pass occupies residues 172-192; that stretch reads CAAQVFYSIGFAGIIFSVDVI. Residues 193-203 lie on the Cytoplasmic side of the membrane; that stretch reads TADTSTLRDRG. Residues 204–224 traverse the membrane as a helical segment; it reads LAYAFTSSPYIITAFGGPAAA. The Extracellular segment spans residues 225-233; it reads EHFYDSNWR. A helical membrane pass occupies residues 234-254; that stretch reads WAYGCFSIVLPVVALPMFCLL. Over 255–289 the chain is Cytoplasmic; the sequence is RWNRHKAKKSGLLKDKADSGRTWMESIRHYIIEFD. Residues 290-310 traverse the membrane as a helical segment; sequence ILGVFFLAAGLVLFLLPFSIA. Over 311–318 the chain is Extracellular; the sequence is GSTEDDWK. The helical transmembrane segment at 319-339 threads the bilayer; sequence SASIITMLVIGFVCLLVFALV. Residues 340–341 are Cytoplasmic-facing; it reads ER. Residues 342 to 362 traverse the membrane as a helical segment; it reads FVAPVPFLPWALLASRTVLGA. The Extracellular portion of the chain corresponds to 363 to 396; sequence CMLDVCYQIAYYCWFNYYTSYLQVVYGTSITTAG. Residues 397 to 417 form a helical membrane-spanning segment; sequence YITSIFDVVSGVWLFIVGFLI. Over 418 to 424 the chain is Cytoplasmic; that stretch reads KKTNRFR. The chain crosses the membrane as a helical span at residues 425-445; the sequence is WLLFIAVPLYILGVGLMIYFR. Over 446 to 450 the chain is Extracellular; it reads KPSWS. Residues 451-471 traverse the membrane as a helical segment; that stretch reads VGYMIMCQIFIAFAGGTMIIC. Residues 472 to 490 are Cytoplasmic-facing; it reads QQVAVLAASDHDHAASSLA. The chain crosses the membrane as a helical span at residues 491–511; it reads FLNVFGTMGSAVGSSISGAIW. Residues 512 to 562 lie on the Extracellular side of the membrane; the sequence is THTLPGALQRLLPDSVKADWQTIYDSLEEQLSYERGTLIRQAIALAYASTQ. Residues 563–583 traverse the membrane as a helical segment; that stretch reads SKMLIAGTAIMALSLVWMFVI. Residues 584-598 are Cytoplasmic-facing; that stretch reads RDIKLTKTQTKGVLF.

It belongs to the major facilitator superfamily.

The protein localises to the cell membrane. Major facilitator transporter involved in fusarinine C (FsC) uptake. In contrast to TAFC-mediated iron uptake, FsC-mediated iron uptake via mirD does not play a significant role during infection. The polypeptide is MFS siderochrome iron transporter D (Aspergillus fumigatus (strain ATCC MYA-4609 / CBS 101355 / FGSC A1100 / Af293) (Neosartorya fumigata)).